We begin with the raw amino-acid sequence, 334 residues long: Glycerol-3-phosphate dehydrogenase [NAD(P)+] (334 aa).

NADPH is bound by residues Trp-13, Arg-33, and Lys-106. Residues Lys-106, Gly-137, and Ser-139 each contribute to the sn-glycerol 3-phosphate site. Ala-141 is a binding site for NADPH. Lys-192, Asp-245, Ser-255, Arg-256, and Asn-257 together coordinate sn-glycerol 3-phosphate. Lys-192 functions as the Proton acceptor in the catalytic mechanism. Arg-256 contacts NADPH. 2 residues coordinate NADPH: Val-280 and Glu-282.

It belongs to the NAD-dependent glycerol-3-phosphate dehydrogenase family.

The protein resides in the cytoplasm. It carries out the reaction sn-glycerol 3-phosphate + NAD(+) = dihydroxyacetone phosphate + NADH + H(+). The enzyme catalyses sn-glycerol 3-phosphate + NADP(+) = dihydroxyacetone phosphate + NADPH + H(+). It participates in membrane lipid metabolism; glycerophospholipid metabolism. In terms of biological role, catalyzes the reduction of the glycolytic intermediate dihydroxyacetone phosphate (DHAP) to sn-glycerol 3-phosphate (G3P), the key precursor for phospholipid synthesis. The chain is Glycerol-3-phosphate dehydrogenase [NAD(P)+] from Chlamydia trachomatis serovar L2b (strain UCH-1/proctitis).